The following is a 164-amino-acid chain: SsrA-binding protein (164 aa).

This sequence belongs to the SmpB family.

Its subcellular location is the cytoplasm. In terms of biological role, required for rescue of stalled ribosomes mediated by trans-translation. Binds to transfer-messenger RNA (tmRNA), required for stable association of tmRNA with ribosomes. tmRNA and SmpB together mimic tRNA shape, replacing the anticodon stem-loop with SmpB. tmRNA is encoded by the ssrA gene; the 2 termini fold to resemble tRNA(Ala) and it encodes a 'tag peptide', a short internal open reading frame. During trans-translation Ala-aminoacylated tmRNA acts like a tRNA, entering the A-site of stalled ribosomes, displacing the stalled mRNA. The ribosome then switches to translate the ORF on the tmRNA; the nascent peptide is terminated with the 'tag peptide' encoded by the tmRNA and targeted for degradation. The ribosome is freed to recommence translation, which seems to be the essential function of trans-translation. The sequence is that of SsrA-binding protein from Synechococcus sp. (strain CC9311).